The sequence spans 408 residues: Energy-coupling factor transporter ATP-binding protein EcfA1 (408 aa).

One can recognise an ABC transporter domain in the interval 140 to 374; sequence IEINHLSFKY…KDFLRNIQLD (235 aa). ATP is bound at residue 174–181; that stretch reads GHNGSGKS.

It belongs to the ABC transporter superfamily. Energy-coupling factor EcfA family. As to quaternary structure, forms a stable energy-coupling factor (ECF) transporter complex composed of 2 membrane-embedded substrate-binding proteins (S component), 2 ATP-binding proteins (A component) and 2 transmembrane proteins (T component).

The protein resides in the cell membrane. ATP-binding (A) component of a common energy-coupling factor (ECF) ABC-transporter complex. Unlike classic ABC transporters this ECF transporter provides the energy necessary to transport a number of different substrates. The polypeptide is Energy-coupling factor transporter ATP-binding protein EcfA1 (Mycoplasma mycoides subsp. mycoides SC (strain CCUG 32753 / NCTC 10114 / PG1)).